The primary structure comprises 337 residues: Inositol 2-dehydrogenase (337 aa).

Belongs to the Gfo/Idh/MocA family. In terms of assembly, homotetramer.

It carries out the reaction myo-inositol + NAD(+) = scyllo-inosose + NADH + H(+). In terms of biological role, involved in the oxidation of myo-inositol (MI) to 2-keto-myo-inositol (2KMI or 2-inosose). This Burkholderia lata (strain ATCC 17760 / DSM 23089 / LMG 22485 / NCIMB 9086 / R18194 / 383) protein is Inositol 2-dehydrogenase.